Reading from the N-terminus, the 259-residue chain is uncharacterized protein (259 aa).

The next 6 helical transmembrane spans lie at 9–31, 84–106, 126–148, 153–175, 196–215, and 230–252; these read ILSV…LESL, LLGG…LQWF, FLIY…FVFG, SIVA…LEYV, HFIL…YIAA, and TFRA…SWLG.

The protein localises to the cell membrane. This is an uncharacterized protein from Archaeoglobus fulgidus (strain ATCC 49558 / DSM 4304 / JCM 9628 / NBRC 100126 / VC-16).